Here is a 398-residue protein sequence, read N- to C-terminus: Phosphoglycerate kinase (398 aa).

Substrate contacts are provided by residues 21–23, arginine 41, 64–67, arginine 123, and arginine 156; these read DFN and HLGR. ATP contacts are provided by residues lysine 207, glycine 294, glutamate 325, and 354–357; that span reads GGDS.

This sequence belongs to the phosphoglycerate kinase family. As to quaternary structure, monomer.

It is found in the cytoplasm. It carries out the reaction (2R)-3-phosphoglycerate + ATP = (2R)-3-phospho-glyceroyl phosphate + ADP. It functions in the pathway carbohydrate degradation; glycolysis; pyruvate from D-glyceraldehyde 3-phosphate: step 2/5. The polypeptide is Phosphoglycerate kinase (Salinibacter ruber (strain DSM 13855 / M31)).